A 239-amino-acid chain; its full sequence is MPKSKRDKKVSLTKTAKKGLELKQNLIEELRKCVDTYKYLFIFSVANMRNSKLKDIRNAWKHSRMFFGKNKVMMVALGRSPSDEYKDNLHQVSKKLRGEVGLLFTNRTKEEVNEWFTKYTEMDFARAGNKATLTVSLDPGPLKQFPHSMEPQLRQLGLPTALKKGVVTLLSDYEVCKEGDVLTPEQARILKLFGYEMAEFKVIIKYMWDAQSGRFQQMDDDLPESAPESEGESEEEDDS.

The disordered stretch occupies residues 216–239 (QQMDDDLPESAPESEGESEEEDDS). Positions 218–239 (MDDDLPESAPESEGESEEEDDS) are enriched in acidic residues. Phosphoserine is present on residues Ser225, Ser229, and Ser233.

This sequence belongs to the universal ribosomal protein uL10 family. Associates with the pre-60S ribosomal particle. Interacts with MINAS-60 (product of an alternative open reading frame of RBM10).

It localises to the nucleus. The protein resides in the nucleolus. It is found in the cytoplasm. Component of the ribosome assembly machinery. Nuclear paralog of the ribosomal protein P0, it binds pre-60S subunits at an early stage of assembly in the nucleolus, and is replaced by P0 in cytoplasmic pre-60S subunits and mature 80S ribosomes. This chain is mRNA turnover protein 4 homolog (Mrto4), found in Mus musculus (Mouse).